A 113-amino-acid polypeptide reads, in one-letter code: U11-theraphotoxin-Hhn1q (113 aa).

The signal sequence occupies residues 1 to 21 (MNTVRVTFLLVFVLAVSLGQA). Positions 22–74 (DKDENRMEMQEKTEQGKSYLDFAENLLLQKLEELEAKLLEEDSEESRNSRQKR) are excised as a propeptide. A disordered region spans residues 61–82 (EEDSEESRNSRQKRCIGEGVPC). Intrachain disulfides connect Cys-75/Cys-90, Cys-82/Cys-95, and Cys-89/Cys-110.

Belongs to the neurotoxin 14 (magi-1) family. 01 (HNTX-16) subfamily. In terms of tissue distribution, expressed by the venom gland.

It is found in the secreted. In terms of biological role, probable ion channel inhibitor. The chain is U11-theraphotoxin-Hhn1q from Cyriopagopus hainanus (Chinese bird spider).